Here is a 449-residue protein sequence, read N- to C-terminus: SUPPRESSOR OF GAMMA RESPONSE 1 (449 aa).

Residues 58-211 (LPRGVKFDPS…DYVVSKIFYQ (154 aa)) enclose the NAC domain. A DNA-binding region spans residues 167-217 (RGCKKIMVLYGGKAVKTNWVMHQYHLGIEEDEKEGDYVVSKIFYQQPQQLV). Basic and acidic residues predominate over residues 324–336 (DDKEEQEKDRDNE). The disordered stretch occupies residues 324 to 348 (DDKEEQEKDRDNENQGEEDPTWFDS).

Phosphorylated in a DNA stress-independent manner. Hyperphosphorylated on SQ motifs upon double-strand breaks, H(2)O(2) or zeocin treatments. Hyperphosphorylation is required for SOG1 function, and unlike constitutive phosphorylation, is ATM dependent. As to expression, expressed in shoot and root apical meristems, in lateral root primordia, in the vasculature of young leaves and in the root stele.

The protein localises to the nucleus. Transcription factor regulating the transcriptional activation response to gamma irradiation. Required for stem-cell death induced by UVB or by gamma irradiation. Not required for ATM activation, but participates in pathways governed by both ATM and ATR sensor kinases. Involved in DNA damage response (DDR) system that regulates cell cycle arrest. Functional homolog of animal p53. Regulates SMR5 and SMR7 transcription. Regulates DNA repair and cytokinin signaling separately and plays a key role in controlling lateral root formation under genotoxic stress. This chain is SUPPRESSOR OF GAMMA RESPONSE 1, found in Arabidopsis thaliana (Mouse-ear cress).